The sequence spans 375 residues: 23S rRNA (uracil(747)-C(5))-methyltransferase RlmC (375 aa).

[4Fe-4S] cluster is bound by residues Cys-3, Cys-11, Cys-14, and Cys-87. S-adenosyl-L-methionine contacts are provided by Gln-212, Phe-241, Glu-262, and Asn-307. The active-site Nucleophile is Cys-334.

The protein belongs to the class I-like SAM-binding methyltransferase superfamily. RNA M5U methyltransferase family. RlmC subfamily.

It catalyses the reaction uridine(747) in 23S rRNA + S-adenosyl-L-methionine = 5-methyluridine(747) in 23S rRNA + S-adenosyl-L-homocysteine + H(+). In terms of biological role, catalyzes the formation of 5-methyl-uridine at position 747 (m5U747) in 23S rRNA. The protein is 23S rRNA (uracil(747)-C(5))-methyltransferase RlmC of Escherichia coli (strain K12 / MC4100 / BW2952).